The chain runs to 51 residues: Insulin-2 (51 aa).

3 cysteine pairs are disulfide-bonded: C8-C37, C20-C50, and C36-C41.

This sequence belongs to the insulin family. As to quaternary structure, heterodimer of a B chain and an A chain linked by two disulfide bonds.

It is found in the secreted. Insulin decreases blood glucose concentration. It increases cell permeability to monosaccharides, amino acids and fatty acids. It accelerates glycolysis, the pentose phosphate cycle, and glycogen synthesis in liver. This Katsuwonus pelamis (Skipjack tuna) protein is Insulin-2.